The following is a 108-amino-acid chain: UPF0060 membrane protein YnfA (108 aa).

The Periplasmic segment spans residues 1–5 (MLKTT). The chain crosses the membrane as a helical span at residues 6–26 (LLFFVTALCEIIGCFLTWLWI). Residues 27 to 30 (KRGA) lie on the Cytoplasmic side of the membrane. Residues 31–51 (SVWWLLPAAASLALFVWLLTL) traverse the membrane as a helical segment. The Periplasmic portion of the chain corresponds to 52–60 (HPAASGRVY). The helical transmembrane segment at 61 to 81 (AAYGGVYVCTALLWLRVVDGV) threads the bilayer. Topologically, residues 82-84 (RLT) are cytoplasmic. The helical transmembrane segment at 85-105 (VYDWCGAPIALCGMLIIVVGW) threads the bilayer. Residues 106–108 (GRT) lie on the Periplasmic side of the membrane.

The protein belongs to the UPF0060 family.

It localises to the cell inner membrane. The polypeptide is UPF0060 membrane protein YnfA (Salmonella dublin (strain CT_02021853)).